Consider the following 196-residue polypeptide: Large ribosomal subunit protein bL9 (196 aa).

The disordered stretch occupies residues 172–196 (NESARPEAFFDPEAEIEQEEGEENA). The segment covering 181–196 (FDPEAEIEQEEGEENA) has biased composition (acidic residues).

It belongs to the bacterial ribosomal protein bL9 family.

In terms of biological role, binds to the 23S rRNA. The polypeptide is Large ribosomal subunit protein bL9 (Chelativorans sp. (strain BNC1)).